Reading from the N-terminus, the 494-residue chain is Guanosine-5'-triphosphate,3'-diphosphate pyrophosphatase (494 aa).

This sequence belongs to the GppA/Ppx family. GppA subfamily.

It carries out the reaction guanosine 3'-diphosphate 5'-triphosphate + H2O = guanosine 3',5'-bis(diphosphate) + phosphate + H(+). It functions in the pathway purine metabolism; ppGpp biosynthesis; ppGpp from GTP: step 2/2. In terms of biological role, catalyzes the conversion of pppGpp to ppGpp. Guanosine pentaphosphate (pppGpp) is a cytoplasmic signaling molecule which together with ppGpp controls the 'stringent response', an adaptive process that allows bacteria to respond to amino acid starvation, resulting in the coordinated regulation of numerous cellular activities. This is Guanosine-5'-triphosphate,3'-diphosphate pyrophosphatase from Escherichia coli O127:H6 (strain E2348/69 / EPEC).